The following is a 422-amino-acid chain: Tyrosine--tRNA ligase (422 aa).

Tyr35 contacts L-tyrosine. The short motif at 40–49 is the 'HIGH' region element; it reads PTAPSLHVGH. Positions 170 and 174 each coordinate L-tyrosine. Residues 231–235 carry the 'KMSKS' region motif; the sequence is KFGKT. Lys234 provides a ligand contact to ATP. Residues 353 to 419 enclose the S4 RNA-binding domain; that stretch reads APVVDLFAEV…GKKNLAAVEI (67 aa).

The protein belongs to the class-I aminoacyl-tRNA synthetase family. TyrS type 1 subfamily. Homodimer.

The protein localises to the cytoplasm. It catalyses the reaction tRNA(Tyr) + L-tyrosine + ATP = L-tyrosyl-tRNA(Tyr) + AMP + diphosphate + H(+). Functionally, catalyzes the attachment of tyrosine to tRNA(Tyr) in a two-step reaction: tyrosine is first activated by ATP to form Tyr-AMP and then transferred to the acceptor end of tRNA(Tyr). The polypeptide is Tyrosine--tRNA ligase (Streptomyces coelicolor (strain ATCC BAA-471 / A3(2) / M145)).